The primary structure comprises 83 residues: ATP synthase subunit c, chloroplastic (83 aa).

2 consecutive transmembrane segments (helical) span residues 4–24 and 57–77; these read IISA…AIGP and LAFM…LLFA.

Belongs to the ATPase C chain family. As to quaternary structure, F-type ATPases have 2 components, F(1) - the catalytic core - and F(0) - the membrane proton channel. F(1) has five subunits: alpha(3), beta(3), gamma(1), delta(1), epsilon(1). F(0) has four main subunits: a(1), b(1), b'(1) and c(10-14). The alpha and beta chains form an alternating ring which encloses part of the gamma chain. F(1) is attached to F(0) by a central stalk formed by the gamma and epsilon chains, while a peripheral stalk is formed by the delta, b and b' chains.

The protein resides in the plastid. Its subcellular location is the chloroplast thylakoid membrane. Functionally, f(1)F(0) ATP synthase produces ATP from ADP in the presence of a proton or sodium gradient. F-type ATPases consist of two structural domains, F(1) containing the extramembraneous catalytic core and F(0) containing the membrane proton channel, linked together by a central stalk and a peripheral stalk. During catalysis, ATP synthesis in the catalytic domain of F(1) is coupled via a rotary mechanism of the central stalk subunits to proton translocation. In terms of biological role, key component of the F(0) channel; it plays a direct role in translocation across the membrane. A homomeric c-ring of between 10-14 subunits forms the central stalk rotor element with the F(1) delta and epsilon subunits. The chain is ATP synthase subunit c, chloroplastic from Galdieria sulphuraria (Red alga).